Here is a 217-residue protein sequence, read N- to C-terminus: Probable transaldolase (217 aa).

Lysine 83 (schiff-base intermediate with substrate) is an active-site residue.

The protein belongs to the transaldolase family. Type 3B subfamily.

Its subcellular location is the cytoplasm. It carries out the reaction D-sedoheptulose 7-phosphate + D-glyceraldehyde 3-phosphate = D-erythrose 4-phosphate + beta-D-fructose 6-phosphate. It participates in carbohydrate degradation; pentose phosphate pathway; D-glyceraldehyde 3-phosphate and beta-D-fructose 6-phosphate from D-ribose 5-phosphate and D-xylulose 5-phosphate (non-oxidative stage): step 2/3. Transaldolase is important for the balance of metabolites in the pentose-phosphate pathway. In Bartonella quintana (strain Toulouse) (Rochalimaea quintana), this protein is Probable transaldolase.